We begin with the raw amino-acid sequence, 578 residues long: Protein BONZAI 1 (578 aa).

A lipid anchor (N-myristoyl glycine) is attached at Gly-2. C2 domains are found at residues 26–163 and 176–303; these read ALGA…TSTL and QPHH…NFSL. Ca(2+) is bound by residues Asp-63, Asp-69, Asp-122, and Asp-124. Positions 341–560 constitute a VWFA domain; the sequence is NFMVAIDFTA…SVVQALLAEL (220 aa).

This sequence belongs to the copine family. As to quaternary structure, interacts (via VWA domain) with BAP1 and BAP2. Interacts with HSP70-1 and HSP70-2. Requires Ca(2+) as cofactor. In terms of processing, based on mass spectrometry analysis, the N-peptide must be modified and there might be additional modifications other than myristoylation. Expressed in roots and flowers and, at higher levels, in leaves and stems. Strongly expressed in growing tissues. Not detected in green siliques.

It is found in the cell membrane. In terms of biological role, negative regulator of cell death and defense responses. Negative regulator of several R genes, including SNC1. May have effects in promoting growth and development. May function in membrane trafficking and in fusion of vesicles with plasma membrane at low temperature. Exhibits calcium-dependent phospholipid binding properties. This Arabidopsis thaliana (Mouse-ear cress) protein is Protein BONZAI 1 (BON1).